The chain runs to 412 residues: Tryptophan synthase beta chain (412 aa).

Lysine 92 carries the post-translational modification N6-(pyridoxal phosphate)lysine.

It belongs to the TrpB family. In terms of assembly, tetramer of two alpha and two beta chains. Pyridoxal 5'-phosphate serves as cofactor.

It carries out the reaction (1S,2R)-1-C-(indol-3-yl)glycerol 3-phosphate + L-serine = D-glyceraldehyde 3-phosphate + L-tryptophan + H2O. Its pathway is amino-acid biosynthesis; L-tryptophan biosynthesis; L-tryptophan from chorismate: step 5/5. The beta subunit is responsible for the synthesis of L-tryptophan from indole and L-serine. The protein is Tryptophan synthase beta chain of Methylibium petroleiphilum (strain ATCC BAA-1232 / LMG 22953 / PM1).